The following is a 199-amino-acid chain: Chaperone protein TorD (199 aa).

Belongs to the TorD/DmsD family. TorD subfamily.

It localises to the cytoplasm. Its function is as follows. Involved in the biogenesis of TorA. Acts on TorA before the insertion of the molybdenum cofactor and, as a result, probably favors a conformation of the apoenzyme that is competent for acquiring the cofactor. In Shigella dysenteriae serotype 1 (strain Sd197), this protein is Chaperone protein TorD.